The sequence spans 227 residues: Cytochrome c oxidase subunit 2 (227 aa).

Over 1–14 (MAHPVQLGLQDATS) the chain is Mitochondrial intermembrane. Residues 15–45 (PVMEELITFHDQALMAMFLISFLILYALSST) form a helical membrane-spanning segment. Topologically, residues 46-59 (LTTKLTNTNITDAQ) are mitochondrial matrix. The helical transmembrane segment at 60–87 (EMETIWTILPAVILILIALPSLRILYMT) threads the bilayer. Topologically, residues 88-227 (DEINNPSFTI…IFEMGPVFTL (140 aa)) are mitochondrial intermembrane. Cu cation is bound by residues His161, Cys196, Glu198, Cys200, His204, and Met207. Glu198 contributes to the Mg(2+) binding site.

The protein belongs to the cytochrome c oxidase subunit 2 family. As to quaternary structure, component of the cytochrome c oxidase (complex IV, CIV), a multisubunit enzyme composed of 14 subunits. The complex is composed of a catalytic core of 3 subunits MT-CO1, MT-CO2 and MT-CO3, encoded in the mitochondrial DNA, and 11 supernumerary subunits COX4I, COX5A, COX5B, COX6A, COX6B, COX6C, COX7A, COX7B, COX7C, COX8 and NDUFA4, which are encoded in the nuclear genome. The complex exists as a monomer or a dimer and forms supercomplexes (SCs) in the inner mitochondrial membrane with NADH-ubiquinone oxidoreductase (complex I, CI) and ubiquinol-cytochrome c oxidoreductase (cytochrome b-c1 complex, complex III, CIII), resulting in different assemblies (supercomplex SCI(1)III(2)IV(1) and megacomplex MCI(2)III(2)IV(2)). Found in a complex with TMEM177, COA6, COX18, COX20, SCO1 and SCO2. Interacts with TMEM177 in a COX20-dependent manner. Interacts with COX20. Interacts with COX16. Cu cation is required as a cofactor.

The protein localises to the mitochondrion inner membrane. The enzyme catalyses 4 Fe(II)-[cytochrome c] + O2 + 8 H(+)(in) = 4 Fe(III)-[cytochrome c] + 2 H2O + 4 H(+)(out). Its function is as follows. Component of the cytochrome c oxidase, the last enzyme in the mitochondrial electron transport chain which drives oxidative phosphorylation. The respiratory chain contains 3 multisubunit complexes succinate dehydrogenase (complex II, CII), ubiquinol-cytochrome c oxidoreductase (cytochrome b-c1 complex, complex III, CIII) and cytochrome c oxidase (complex IV, CIV), that cooperate to transfer electrons derived from NADH and succinate to molecular oxygen, creating an electrochemical gradient over the inner membrane that drives transmembrane transport and the ATP synthase. Cytochrome c oxidase is the component of the respiratory chain that catalyzes the reduction of oxygen to water. Electrons originating from reduced cytochrome c in the intermembrane space (IMS) are transferred via the dinuclear copper A center (CU(A)) of subunit 2 and heme A of subunit 1 to the active site in subunit 1, a binuclear center (BNC) formed by heme A3 and copper B (CU(B)). The BNC reduces molecular oxygen to 2 water molecules using 4 electrons from cytochrome c in the IMS and 4 protons from the mitochondrial matrix. The protein is Cytochrome c oxidase subunit 2 (MT-CO2) of Papio anubis (Olive baboon).